Here is a 357-residue protein sequence, read N- to C-terminus: Membrane-bound lytic murein transglycosylase C (357 aa).

The N-terminal stretch at Met1–Ser16 is a signal peptide. Cys17 is lipidated: N-palmitoyl cysteine. A lipid anchor (S-diacylglycerol cysteine) is attached at Cys17.

Belongs to the transglycosylase Slt family.

It localises to the cell outer membrane. The enzyme catalyses Exolytic cleavage of the (1-&gt;4)-beta-glycosidic linkage between N-acetylmuramic acid (MurNAc) and N-acetylglucosamine (GlcNAc) residues in peptidoglycan, from either the reducing or the non-reducing ends of the peptidoglycan chains, with concomitant formation of a 1,6-anhydrobond in the MurNAc residue.. In terms of biological role, murein-degrading enzyme. May play a role in recycling of muropeptides during cell elongation and/or cell division. The polypeptide is Membrane-bound lytic murein transglycosylase C (Pectobacterium atrosepticum (strain SCRI 1043 / ATCC BAA-672) (Erwinia carotovora subsp. atroseptica)).